A 1079-amino-acid polypeptide reads, in one-letter code: Psi-producing oxygenase A (1079 aa).

A linoleate 8R-lipoxygenase region spans residues 105 to 446 (TNTFLTTLWN…DGSYDDNDLV (342 aa)). Position 202 (H202) interacts with heme b. Residue Y374 is part of the active site. Residue H377 participates in heme b binding. The segment at 654-1079 (QFINSHSACM…WDGDLPEVKE (426 aa)) is 9,12-octadecadienoate 8-hydroperoxide 8R-isomerase.

The protein belongs to the peroxidase family. In terms of assembly, homotetramer. Requires heme b as cofactor.

It carries out the reaction (9Z,12Z)-octadecadienoate + O2 = (8R,9Z,12Z)-8-hydroperoxyoctadeca-9,12-dienoate. It catalyses the reaction (8R,9Z,12Z)-8-hydroperoxyoctadeca-9,12-dienoate = (5S,8R,9Z,12Z)-5,8-dihydroxyoctadeca-9,12-dienoate. In terms of biological role, bifunctional heme-containing enzyme that oxidizes linoleic acid to (8R,9Z,12Z)-8-hydroperoxyoctadeca-9,12-dienoate (within the N-terminal heme peroxidase domain), which is subsequently isomerized to (5S,8R,9Z,12Z)-5,8-dihydroxyoctadeca-9,12-dienoate (within the C-terminal P450 heme thiolate domain). Oxidized unsaturated fatty acids, so-called oxylipins, derived from endogenous fatty acids, influence the development of the asexual conidiophores and sexual cleistothecia and regulate the secondary metabolism. These substances were collectively named psi factors and are primarily a mixture of hydroxylated oleic, linoleic and alpha-linolenic acids. They are termed psi-beta, psi-alpha, and psi-gamma, respectively. Oxylipins may also serve as activators of mammalian immune responses contributing to enhanced resistance to opportunistic fungi and as factors that modulate fungal development contributing to resistance to host defenses. This Aspergillus fumigatus (strain ATCC MYA-4609 / CBS 101355 / FGSC A1100 / Af293) (Neosartorya fumigata) protein is Psi-producing oxygenase A (ppoA).